The primary structure comprises 368 residues: Flap endonuclease 1 (368 aa).

Positions 1-104 are N-domain; the sequence is MGIHDLSKVI…GELLKRGARR (104 aa). D34 is a Mg(2+) binding site. Residues R47 and R70 each coordinate DNA. Position 86 (D86) interacts with Mg(2+). The interval 103-123 is disordered; sequence RRKEAQANLEEATEQGDTEQM. An I-domain region spans residues 122 to 251; it reads QMEKFSRRLV…QKAYQLIKEH (130 aa). 4 residues coordinate Mg(2+): E158, E160, D179, and D181. DNA is bound at residue E158. The DNA site is built by G229 and D231. D231 is a binding site for Mg(2+). Positions 334–342 are interaction with PCNA; sequence QQGRLDSFF.

It belongs to the XPG/RAD2 endonuclease family. FEN1 subfamily. In terms of assembly, interacts with PCNA. Three molecules of FEN1 bind to one PCNA trimer with each molecule binding to one PCNA monomer. PCNA stimulates the nuclease activity without altering cleavage specificity. Requires Mg(2+) as cofactor. In terms of processing, phosphorylated. Phosphorylation upon DNA damage induces relocalization to the nuclear plasma.

It is found in the nucleus. The protein localises to the nucleolus. Its subcellular location is the nucleoplasm. The protein resides in the mitochondrion. Structure-specific nuclease with 5'-flap endonuclease and 5'-3' exonuclease activities involved in DNA replication and repair. During DNA replication, cleaves the 5'-overhanging flap structure that is generated by displacement synthesis when DNA polymerase encounters the 5'-end of a downstream Okazaki fragment. It enters the flap from the 5'-end and then tracks to cleave the flap base, leaving a nick for ligation. Also involved in the long patch base excision repair (LP-BER) pathway, by cleaving within the apurinic/apyrimidinic (AP) site-terminated flap. Acts as a genome stabilization factor that prevents flaps from equilibrating into structures that lead to duplications and deletions. Also possesses 5'-3' exonuclease activity on nicked or gapped double-stranded DNA, and exhibits RNase H activity. Also involved in replication and repair of rDNA and in repairing mitochondrial DNA. The chain is Flap endonuclease 1 from Monosiga brevicollis (Choanoflagellate).